An 897-amino-acid chain; its full sequence is MEQSEDTIQHERKNTFLSRVFGVHSSEVGDSIETAELSQYPIQIARSGSNAIDESRVIESDQASSSEEEDTDGHDLSVAENMTSYNGAQGSGSEDSDVPFSDQELETIETYTIAKVGQGSSSEDDRLQADSAEEEDALLFQHRLQDGSKGRNKVSSQPLGLKRILGSKGKSILGKEPASQEDSFIFRKGPTWDEENQLRPESKRPGLLSGKSNARLSSPSRPSPLSARERALWKWANVENLDGFLQDVYSYYLGNGFYCIMIEKILNLLTLLFIVFISTYMSHCIDYSKLPNGHKFSDVRVDQCYETQITGTTKLLFWIFGVFVVLKVVQMYFDFRRIHEIHNFYTYLLNISDKELQTIPWQSVIHQIMRLKDQNAVTANVVEVKAKNHIDAHDVANRIMRKENYLIALYNKDILHLSLPIPLYRTSTLTKTLEWNIHLCIIGFAFNEAGFLKQSFLNPAQREFLSEELKKRFILAGFLNIILAPFLVVYFVLLYFFRYFNEYKTSPGSLSTRQYTPIAEWKFREYNELYHLFKKRMGLSYEVANTYINQFPNALGDYFFKFVKFISGSFVAILALMTVLDPENFLNFELTADRTVLFYMTVLGTIWAVCHSAVNDNCSVFDPEDSLKELITYIHYAPKEWDGRYHTDEVKQEFCKLYNLRVILLLRELASLIMTPFILWFSLPNSAESIVDFFREVTVYGDGLGYVCKYAMFDENCKKGLRTNKHLQGTQTKYGHSLGDDHDSSDEETDKGMNKMIQSYMYFVDDYQNSVNAVGKYQIPKTQNLSHESKYNMKSHQHYSWKKQFKLGSKPEDFKIGSVTPRALSSSILANKPKSNLRARLDPEISHSNVQFDDLGESFINSIPVADYDPIERSDAMGGNGVLGLLNQYYRKSDVGR.

Residues 1-256 lie on the Cytoplasmic side of the membrane; that stretch reads MEQSEDTIQH…DVYSYYLGNG (256 aa). Disordered stretches follow at residues 46–106, 112–131, and 195–224; these read RSGS…QELE, TIAKVGQGSSSEDDRLQADS, and ENQLRPESKRPGLLSGKSNARLSSPSRPSP. Polar residues predominate over residues 80–93; sequence ENMTSYNGAQGSGS. Low complexity predominate over residues 214 to 224; that stretch reads ARLSSPSRPSP. A helical membrane pass occupies residues 257 to 277; sequence FYCIMIEKILNLLTLLFIVFI. At 278 to 314 the chain is on the lumenal side; the sequence is STYMSHCIDYSKLPNGHKFSDVRVDQCYETQITGTTK. The helical transmembrane segment at 315–335 threads the bilayer; it reads LLFWIFGVFVVLKVVQMYFDF. Topologically, residues 336–431 are cytoplasmic; the sequence is RRIHEIHNFY…PLYRTSTLTK (96 aa). Residues 432-452 lie within the membrane without spanning it; it reads TLEWNIHLCIIGFAFNEAGFL. At 453–472 the chain is on the cytoplasmic side; sequence KQSFLNPAQREFLSEELKKR. A helical transmembrane segment spans residues 473-493; that stretch reads FILAGFLNIILAPFLVVYFVL. At 494 to 558 the chain is on the lumenal side; the sequence is LYFFRYFNEY…NQFPNALGDY (65 aa). A helical membrane pass occupies residues 559–579; it reads FFKFVKFISGSFVAILALMTV. Over 580–661 the chain is Cytoplasmic; that stretch reads LDPENFLNFE…QEFCKLYNLR (82 aa). Residues 662 to 682 lie within the membrane without spanning it; sequence VILLLRELASLIMTPFILWFS. Over 683 to 897 the chain is Cytoplasmic; sequence LPNSAESIVD…QYYRKSDVGR (215 aa).

It belongs to the ATG9 family. As to quaternary structure, homotrimer; forms a homotrimer with a central pore that forms a path between the two membrane leaflets. Phosphorylated by ATG1. ATG1 phosphorylation is required for preautophagosome elongation.

Its subcellular location is the preautophagosomal structure membrane. The protein localises to the cytoplasmic vesicle membrane. It localises to the golgi apparatus membrane. The protein resides in the endoplasmic reticulum membrane. It carries out the reaction a 1,2-diacyl-sn-glycero-3-phosphocholine(in) = a 1,2-diacyl-sn-glycero-3-phosphocholine(out). It catalyses the reaction a 1,2-diacyl-sn-glycero-3-phospho-L-serine(in) = a 1,2-diacyl-sn-glycero-3-phospho-L-serine(out). The enzyme catalyses a 1,2-diacyl-sn-glycero-3-phosphoethanolamine(in) = a 1,2-diacyl-sn-glycero-3-phosphoethanolamine(out). The catalysed reaction is a 1,2-diacyl-sn-glycero-3-phospho-(1D-myo-inositol-3-phosphate)(in) = a 1,2-diacyl-sn-glycero-3-phospho-(1D-myo-inositol-3-phosphate)(out). Functionally, phospholipid scramblase involved in autophagy and cytoplasm to vacuole transport (Cvt) vesicle formation. Cycles between the preautophagosomal structure/phagophore assembly site (PAS) and the cytoplasmic vesicle pool and supplies membrane for the growing autophagosome. Lipid scramblase activity plays a key role in preautophagosomal structure/phagophore assembly by distributing the phospholipids that arrive through ATG2 from the cytoplasmic to the luminal leaflet of the bilayer, thereby driving autophagosomal membrane expansion. Required for mitophagy. Also involved in endoplasmic reticulum-specific autophagic process and is essential for the survival of cells subjected to severe ER stress. Different machineries are required for anterograde trafficking to the PAS during either the Cvt pathway or bulk autophagy and for retrograde trafficking. The protein is Autophagy-related protein 9 (ATG9) of Eremothecium gossypii (strain ATCC 10895 / CBS 109.51 / FGSC 9923 / NRRL Y-1056) (Yeast).